Consider the following 178-residue polypeptide: Fucolectin-1 (178 aa).

Positions 1 to 20 are cleaved as a signal peptide; the sequence is MKVKTIMLLFQILAISTIKS. The interval 29-178 is F5/8 type C-like; it reads QENVAVRGKA…VEVNALLPVN (150 aa). Residues Asp-59, Asn-61, and Ser-70 each contribute to the Ca(2+) site. Disulfide bonds link Cys-71/Cys-167, Cys-103/Cys-104, and Cys-129/Cys-145. Alpha-L-fucose is bound by residues His-73 and Arg-100. A Cell attachment site motif is present at residues 100–102; it reads RGD. Residue Arg-107 participates in alpha-L-fucose binding. Positions 167 and 168 each coordinate Ca(2+).

It belongs to the fucolectin family. Homotrimer. Parenchymal hepatocytes.

It localises to the secreted. The protein localises to the extracellular space. Acts as a defensive agent. Recognizes blood group fucosylated oligosaccharides including A, B, H and Lewis B-type antigens. Does not recognize Lewis A antigen and has low affinity for monovalent haptens. The chain is Fucolectin-1 from Anguilla japonica (Japanese eel).